We begin with the raw amino-acid sequence, 237 residues long: Probable septum site-determining protein MinC (237 aa).

This sequence belongs to the MinC family. As to quaternary structure, interacts with MinD and FtsZ.

Cell division inhibitor that blocks the formation of polar Z ring septums. Rapidly oscillates between the poles of the cell to destabilize FtsZ filaments that have formed before they mature into polar Z rings. Prevents FtsZ polymerization. The protein is Probable septum site-determining protein MinC of Neisseria gonorrhoeae.